We begin with the raw amino-acid sequence, 138 residues long: Holo-[acyl-carrier-protein] synthase (138 aa).

Residues Asp8 and Glu57 each coordinate Mg(2+).

This sequence belongs to the P-Pant transferase superfamily. AcpS family. The cofactor is Mg(2+).

It localises to the cytoplasm. The enzyme catalyses apo-[ACP] + CoA = holo-[ACP] + adenosine 3',5'-bisphosphate + H(+). Its function is as follows. Transfers the 4'-phosphopantetheine moiety from coenzyme A to a Ser of acyl-carrier-protein. The protein is Holo-[acyl-carrier-protein] synthase of Phenylobacterium zucineum (strain HLK1).